The following is a 143-amino-acid chain: MQLNSIKPAAGAKHAKRRVGRGIGSGLGKTAGRGHKGQKSRAGGYHKVGFEGGQMPLQRRLPKRGFKSQSLRFNAEVTLTTLDRLGLAEVDVLALKQAGLVGELIKVVKVIKSGALNRAVKLSGVGVTAGAKAAIEAAGGSVA.

The disordered stretch occupies residues 1–56; it reads MQLNSIKPAAGAKHAKRRVGRGIGSGLGKTAGRGHKGQKSRAGGYHKVGFEGGQMP. Residues 21-31 show a composition bias toward gly residues; it reads RGIGSGLGKTA.

Belongs to the universal ribosomal protein uL15 family. Part of the 50S ribosomal subunit.

Its function is as follows. Binds to the 23S rRNA. The protein is Large ribosomal subunit protein uL15 of Verminephrobacter eiseniae (strain EF01-2).